The sequence spans 100 residues: Aspartyl/glutamyl-tRNA(Asn/Gln) amidotransferase subunit C (100 aa).

The protein belongs to the GatC family. As to quaternary structure, heterotrimer of A, B and C subunits.

It carries out the reaction L-glutamyl-tRNA(Gln) + L-glutamine + ATP + H2O = L-glutaminyl-tRNA(Gln) + L-glutamate + ADP + phosphate + H(+). It catalyses the reaction L-aspartyl-tRNA(Asn) + L-glutamine + ATP + H2O = L-asparaginyl-tRNA(Asn) + L-glutamate + ADP + phosphate + 2 H(+). Allows the formation of correctly charged Asn-tRNA(Asn) or Gln-tRNA(Gln) through the transamidation of misacylated Asp-tRNA(Asn) or Glu-tRNA(Gln) in organisms which lack either or both of asparaginyl-tRNA or glutaminyl-tRNA synthetases. The reaction takes place in the presence of glutamine and ATP through an activated phospho-Asp-tRNA(Asn) or phospho-Glu-tRNA(Gln). The chain is Aspartyl/glutamyl-tRNA(Asn/Gln) amidotransferase subunit C from Herminiimonas arsenicoxydans.